The following is a 519-amino-acid chain: T-complex protein 1 subunit gamma (519 aa).

This sequence belongs to the TCP-1 chaperonin family. In terms of assembly, component of the T-complex protein 1 (TCP1) complex.

The protein localises to the cytoplasm. Functionally, molecular chaperone; assists the folding of proteins upon ATP hydrolysis. This is T-complex protein 1 subunit gamma (CCT3) from Encephalitozoon cuniculi (strain GB-M1) (Microsporidian parasite).